A 246-amino-acid polypeptide reads, in one-letter code: Probable transcriptional regulatory protein CLB_3102 (246 aa).

It belongs to the TACO1 family.

It is found in the cytoplasm. The polypeptide is Probable transcriptional regulatory protein CLB_3102 (Clostridium botulinum (strain ATCC 19397 / Type A)).